Consider the following 103-residue polypeptide: MADSYTELEKAVVVLVENFYKYVSKHSLVKNKISKSSFRKMLQKELNHMLTDTGNRKAADKLIQNLDANHDGRISFDEYWTLIGGITSPIANLIRQQEQQSSS.

The EF-hand 1; degenerate domain occupies 12–47 (VVVLVENFYKYVSKHSLVKNKISKSSFRKMLQKELN). Residues 54–89 (GNRKAADKLIQNLDANHDGRISFDEYWTLIGGITSP) enclose the EF-hand 2 domain. Ca(2+)-binding residues include aspartate 67, asparagine 69, aspartate 71, arginine 73, and glutamate 78.

This sequence belongs to the S-100 family. In terms of assembly, homodimer. Interacts with TP53.

The protein localises to the nucleus. The protein resides in the nucleolus. It is found in the cytoplasm. Functionally, calcium-binding protein. Binds one calcium ion per monomer. Can promote differentiation of adipocytes (in vitro). Overexpression in preadipocytes increases their proliferation, enhances adipogenesis and reduces insulin-stimulated glucose uptake. The polypeptide is Protein S100-A16 (S100A16) (Bos taurus (Bovine)).